Consider the following 332-residue polypeptide: Ferredoxin--NADP reductase 1 (332 aa).

Residues aspartate 35, lysine 43, phenylalanine 48, valine 88, phenylalanine 123, aspartate 284, and threonine 325 each coordinate FAD.

This sequence belongs to the ferredoxin--NADP reductase type 2 family. As to quaternary structure, homodimer. It depends on FAD as a cofactor.

The catalysed reaction is 2 reduced [2Fe-2S]-[ferredoxin] + NADP(+) + H(+) = 2 oxidized [2Fe-2S]-[ferredoxin] + NADPH. The protein is Ferredoxin--NADP reductase 1 of Listeria welshimeri serovar 6b (strain ATCC 35897 / DSM 20650 / CCUG 15529 / CIP 8149 / NCTC 11857 / SLCC 5334 / V8).